A 78-amino-acid polypeptide reads, in one-letter code: uncharacterized protein (78 aa).

This is an uncharacterized protein from Ureaplasma parvum serovar 3 (strain ATCC 700970).